Here is a 115-residue protein sequence, read N- to C-terminus: uncharacterized protein (115 aa).

This is an uncharacterized protein from Rickettsia prowazekii (strain Madrid E).